The chain runs to 436 residues: 3-hydroxy-3-methylglutaryl-coenzyme A reductase (436 aa).

Active-site charge relay system residues include E99, K277, and D293. The active-site Proton donor is the H390.

It belongs to the HMG-CoA reductase family.

It carries out the reaction (R)-mevalonate + 2 NADP(+) + CoA = (3S)-3-hydroxy-3-methylglutaryl-CoA + 2 NADPH + 2 H(+). The protein operates within metabolic intermediate biosynthesis; (R)-mevalonate biosynthesis; (R)-mevalonate from acetyl-CoA: step 3/3. Converts HMG-CoA to mevalonate. This Archaeoglobus fulgidus (strain ATCC 49558 / DSM 4304 / JCM 9628 / NBRC 100126 / VC-16) protein is 3-hydroxy-3-methylglutaryl-coenzyme A reductase (hmgA).